The following is a 418-amino-acid chain: Multidrug resistance protein MdtG (418 aa).

The next 11 helical transmembrane spans lie at 19–39, 56–76, 90–110, 113–133, 144–164, 171–191, 222–242, 251–271, 288–308, 317–337, and 376–396; these read IGCFLTGAAFSLVMPFLPLYV, LVFSITFLFSAIASPFWGGLA, LGMAIVMLLMGLAQNIWQFLI, ALLGLLGGFIPNANALIATQI, TLSTGGVSGALLGPLVGGVLA, PVFFMTASVLFLCFLLTLLFI, LFVTTLIIQVATGSIAPILTL, VANIAFISGMIASVPGVAALI, ILIAALVISVLLLIPMSFVQT, FLLGAADGALLPAVQTLLVYN, and AVFLVTAMVVLFNAVYTGLSL.

Belongs to the major facilitator superfamily. DHA1 family. MdtG (TC 2.A.1.2.20) subfamily.

The protein localises to the cell inner membrane. This chain is Multidrug resistance protein MdtG, found in Enterobacter lignolyticus (strain SCF1).